A 226-amino-acid chain; its full sequence is Phosphoribosylformylglycinamidine synthase subunit PurQ (226 aa).

One can recognise a Glutamine amidotransferase type-1 domain in the interval 3-225; the sequence is FAVIVFPGSN…VKWGARHVTY (223 aa). C86 serves as the catalytic Nucleophile. Active-site residues include H194 and E196.

In terms of assembly, part of the FGAM synthase complex composed of 1 PurL, 1 PurQ and 2 PurS subunits.

It localises to the cytoplasm. The enzyme catalyses N(2)-formyl-N(1)-(5-phospho-beta-D-ribosyl)glycinamide + L-glutamine + ATP + H2O = 2-formamido-N(1)-(5-O-phospho-beta-D-ribosyl)acetamidine + L-glutamate + ADP + phosphate + H(+). The catalysed reaction is L-glutamine + H2O = L-glutamate + NH4(+). The protein operates within purine metabolism; IMP biosynthesis via de novo pathway; 5-amino-1-(5-phospho-D-ribosyl)imidazole from N(2)-formyl-N(1)-(5-phospho-D-ribosyl)glycinamide: step 1/2. Its function is as follows. Part of the phosphoribosylformylglycinamidine synthase complex involved in the purines biosynthetic pathway. Catalyzes the ATP-dependent conversion of formylglycinamide ribonucleotide (FGAR) and glutamine to yield formylglycinamidine ribonucleotide (FGAM) and glutamate. The FGAM synthase complex is composed of three subunits. PurQ produces an ammonia molecule by converting glutamine to glutamate. PurL transfers the ammonia molecule to FGAR to form FGAM in an ATP-dependent manner. PurS interacts with PurQ and PurL and is thought to assist in the transfer of the ammonia molecule from PurQ to PurL. The polypeptide is Phosphoribosylformylglycinamidine synthase subunit PurQ (Exiguobacterium sp. (strain ATCC BAA-1283 / AT1b)).